The sequence spans 197 residues: ATP-dependent Clp protease proteolytic subunit 1 (197 aa).

The active-site Nucleophile is the S100. The active site involves H125.

The protein belongs to the peptidase S14 family. Fourteen ClpP subunits assemble into 2 heptameric rings which stack back to back to give a disk-like structure with a central cavity, resembling the structure of eukaryotic proteasomes.

The protein localises to the cytoplasm. The catalysed reaction is Hydrolysis of proteins to small peptides in the presence of ATP and magnesium. alpha-casein is the usual test substrate. In the absence of ATP, only oligopeptides shorter than five residues are hydrolyzed (such as succinyl-Leu-Tyr-|-NHMec, and Leu-Tyr-Leu-|-Tyr-Trp, in which cleavage of the -Tyr-|-Leu- and -Tyr-|-Trp bonds also occurs).. Functionally, cleaves peptides in various proteins in a process that requires ATP hydrolysis. Has a chymotrypsin-like activity. Plays a major role in the degradation of misfolded proteins. This chain is ATP-dependent Clp protease proteolytic subunit 1, found in Gloeobacter violaceus (strain ATCC 29082 / PCC 7421).